A 368-amino-acid polypeptide reads, in one-letter code: Peptide chain release factor 2 (368 aa).

At glutamine 251 the chain carries N5-methylglutamine.

It belongs to the prokaryotic/mitochondrial release factor family. Methylated by PrmC. Methylation increases the termination efficiency of RF2.

It localises to the cytoplasm. Peptide chain release factor 2 directs the termination of translation in response to the peptide chain termination codons UGA and UAA. This chain is Peptide chain release factor 2, found in Nitratiruptor sp. (strain SB155-2).